The sequence spans 246 residues: MAAKIPGVIALFDVDGTLTAPRKEATPELLDFIRELRKVVTIGVVGGSDLSKISEQLGKTVTNDYDYCFSENGLVAHKDGKSIGIQSLKLHLGDDKLKELINFTLHYIADLDIPIKRGTFIEFRNGMLNVSPIGRNCSQEERDEFERYDKVQNIRPKMVAELRERFAHLNLTFSIGGQISFDVFPKGWDKTYCLQYLEDFSEIHFFGDKTYEGGNDYEIYESPKTIGHSVTSPDDTVAKCKALFMS.

Catalysis depends on aspartate 13, which acts as the Nucleophile. The Mg(2+) site is built by aspartate 13 and aspartate 15. Aspartate 15 (proton donor/acceptor) is an active-site residue. Alpha-D-mannose 1-phosphate contacts are provided by arginine 22, arginine 124, arginine 135, arginine 142, serine 180, and aspartate 182. Positions 208, 220, and 225 each coordinate Mg(2+).

This sequence belongs to the eukaryotic PMM family. Homodimer. Mg(2+) serves as cofactor. As to expression, expressed in roots, stems, leaves, flowers and immature fruits.

The protein resides in the cytoplasm. It carries out the reaction alpha-D-mannose 1-phosphate = D-mannose 6-phosphate. Its pathway is nucleotide-sugar biosynthesis; GDP-alpha-D-mannose biosynthesis; alpha-D-mannose 1-phosphate from D-fructose 6-phosphate: step 2/2. Catalyzes the interconversion of mannose-6-phosphate to mannose-1-phosphate, the precursor for the synthesis of GDP-mannose. GDP-mannose is an essential sugar nucleotide for the synthesis of D-mannose-containing cell wall polysaccharides (galactomannans and glucomannans), glycolipids, glycoproteins and the antioxidant L-ascorbate. Can complement the yeast temperature-sensitive mutant sec53-6. This chain is Phosphomannomutase, found in Arabidopsis thaliana (Mouse-ear cress).